A 143-amino-acid chain; its full sequence is Transcriptional regulator MraZ (143 aa).

SpoVT-AbrB domains lie at 5–47 (TYEP…SAEE) and 76–119 (ASDE…DAAA).

Belongs to the MraZ family. As to quaternary structure, forms oligomers.

It is found in the cytoplasm. The protein localises to the nucleoid. The polypeptide is Transcriptional regulator MraZ (Kocuria rhizophila (strain ATCC 9341 / DSM 348 / NBRC 103217 / DC2201)).